The following is a 542-amino-acid chain: Phosphoenolpyruvate carboxykinase (ATP) (542 aa).

Residues R67, Y208, and K214 each contribute to the substrate site. ATP is bound by residues K214, H233, and 249 to 257 (GLSGTGKTT). Residues K214 and H233 each coordinate Mn(2+). D270 is a binding site for Mn(2+). ATP is bound by residues E298, R334, 450-451 (RI), and T456. R334 lines the substrate pocket.

Belongs to the phosphoenolpyruvate carboxykinase (ATP) family. In terms of assembly, monomer. It depends on Mn(2+) as a cofactor.

The protein resides in the cytoplasm. The enzyme catalyses oxaloacetate + ATP = phosphoenolpyruvate + ADP + CO2. It participates in carbohydrate biosynthesis; gluconeogenesis. Involved in the gluconeogenesis. Catalyzes the conversion of oxaloacetate (OAA) to phosphoenolpyruvate (PEP) through direct phosphoryl transfer between the nucleoside triphosphate and OAA. The chain is Phosphoenolpyruvate carboxykinase (ATP) from Vibrio vulnificus (strain YJ016).